A 230-amino-acid polypeptide reads, in one-letter code: Cytochrome c oxidase subunit 2 (230 aa).

Topologically, residues 1 to 29 are mitochondrial intermembrane; sequence NNFFQGYNLLFQHSLFASYMDWFHAFNCS. Residues 30 to 50 form a helical membrane-spanning segment; the sequence is LLLGVLVFVTLLFGYLIFSTF. Topologically, residues 51–63 are mitochondrial matrix; the sequence is YFKSKKIEYQFGE. The chain crosses the membrane as a helical span at residues 64 to 84; the sequence is LLCSIFPTIILLMQMVPSLSL. At 85 to 230 the chain is on the mitochondrial intermembrane side; it reads LYYYGLMNLD…FKSWCFGTME (146 aa). H163, C198, E200, C202, H206, and M209 together coordinate Cu cation. A Mg(2+)-binding site is contributed by E200.

The protein belongs to the cytochrome c oxidase subunit 2 family. In terms of assembly, component of the cytochrome c oxidase (complex IV, CIV), a multisubunit enzyme composed of a catalytic core of 3 subunits and several supernumerary subunits. The complex exists as a monomer or a dimer and forms supercomplexes (SCs) in the inner mitochondrial membrane with ubiquinol-cytochrome c oxidoreductase (cytochrome b-c1 complex, complex III, CIII). It depends on Cu cation as a cofactor.

Its subcellular location is the mitochondrion inner membrane. It catalyses the reaction 4 Fe(II)-[cytochrome c] + O2 + 8 H(+)(in) = 4 Fe(III)-[cytochrome c] + 2 H2O + 4 H(+)(out). In terms of biological role, component of the cytochrome c oxidase, the last enzyme in the mitochondrial electron transport chain which drives oxidative phosphorylation. The respiratory chain contains 3 multisubunit complexes succinate dehydrogenase (complex II, CII), ubiquinol-cytochrome c oxidoreductase (cytochrome b-c1 complex, complex III, CIII) and cytochrome c oxidase (complex IV, CIV), that cooperate to transfer electrons derived from NADH and succinate to molecular oxygen, creating an electrochemical gradient over the inner membrane that drives transmembrane transport and the ATP synthase. Cytochrome c oxidase is the component of the respiratory chain that catalyzes the reduction of oxygen to water. Electrons originating from reduced cytochrome c in the intermembrane space (IMS) are transferred via the dinuclear copper A center (CU(A)) of subunit 2 and heme A of subunit 1 to the active site in subunit 1, a binuclear center (BNC) formed by heme A3 and copper B (CU(B)). The BNC reduces molecular oxygen to 2 water molecules using 4 electrons from cytochrome c in the IMS and 4 protons from the mitochondrial matrix. The protein is Cytochrome c oxidase subunit 2 (cox-2) of Caenorhabditis remanei (Caenorhabditis vulgaris).